A 143-amino-acid polypeptide reads, in one-letter code: Peptide methionine sulfoxide reductase MsrB (143 aa).

The MsrB domain occupies 16-139 (DAELRRRLTP…NSAALNFESR (124 aa)). 4 residues coordinate Zn(2+): Cys55, Cys58, Cys104, and Cys107. Cys128 (nucleophile) is an active-site residue.

The protein belongs to the MsrB Met sulfoxide reductase family. Zn(2+) is required as a cofactor.

The enzyme catalyses L-methionyl-[protein] + [thioredoxin]-disulfide + H2O = L-methionyl-(R)-S-oxide-[protein] + [thioredoxin]-dithiol. This is Peptide methionine sulfoxide reductase MsrB from Burkholderia lata (strain ATCC 17760 / DSM 23089 / LMG 22485 / NCIMB 9086 / R18194 / 383).